We begin with the raw amino-acid sequence, 424 residues long: uncharacterized protein (424 aa).

11 consecutive transmembrane segments (helical) span residues 9-29 (ITWIQGTALTIGAVLGCGILI), 41-61 (ASLFVWVFMSFLSFFLVGTLA), 86-106 (GAILGWIMLGSVPIGVPIIAL), 119-139 (ADWQITLIAGCMLAISILLHM), 148-168 (ISTLVICVIVFLLVTSIAVSL), 184-204 (WSAAGSVSVMIFFSFVGWEMI), 222-242 (LFLAASCVAGLYIMLSFVTVG), 270-290 (VTVCLALFITFATIHANIAGF), 320-340 (VLTAMAAVFGLVLAAHGLFQI), 345-365 (LLKGPSAAFIASYICTMAAAL), and 377-397 (MALGAFVACAVIYSFSGWALL).

Belongs to the amino acid-polyamine-organocation (APC) superfamily.

Its subcellular location is the cell membrane. This is an uncharacterized protein from Bacillus subtilis (strain 168).